We begin with the raw amino-acid sequence, 359 residues long: 4-hydroxy-2-oxovalerate aldolase 1 (359 aa).

A Pyruvate carboxyltransferase domain is found at 23–275 (VRVTDTSLRD…KTGIDFFDIA (253 aa)). Residue 31 to 32 (RD) participates in substrate binding. Aspartate 32 is a binding site for Mn(2+). Histidine 35 serves as the catalytic Proton acceptor. Residues serine 185 and histidine 214 each coordinate substrate. Mn(2+)-binding residues include histidine 214 and histidine 216. Tyrosine 305 lines the substrate pocket.

The protein belongs to the 4-hydroxy-2-oxovalerate aldolase family.

It carries out the reaction (S)-4-hydroxy-2-oxopentanoate = acetaldehyde + pyruvate. This chain is 4-hydroxy-2-oxovalerate aldolase 1, found in Mycobacteroides abscessus (strain ATCC 19977 / DSM 44196 / CCUG 20993 / CIP 104536 / JCM 13569 / NCTC 13031 / TMC 1543 / L948) (Mycobacterium abscessus).